Here is a 448-residue protein sequence, read N- to C-terminus: Trigger factor (448 aa).

The 82-residue stretch at Gly-162–Pro-243 folds into the PPIase FKBP-type domain.

It belongs to the FKBP-type PPIase family. Tig subfamily.

The protein localises to the cytoplasm. The enzyme catalyses [protein]-peptidylproline (omega=180) = [protein]-peptidylproline (omega=0). In terms of biological role, involved in protein export. Acts as a chaperone by maintaining the newly synthesized protein in an open conformation. Functions as a peptidyl-prolyl cis-trans isomerase. The polypeptide is Trigger factor (Salinispora arenicola (strain CNS-205)).